The following is a 53-amino-acid chain: HOXB-AS3 peptide (53 aa).

Residues 1–53 are disordered; the sequence is MPVLPGTQRYPHQRRRFQAAGGGAESGKRGSEEAPGVAWSGSESGRDAATPAW.

In terms of assembly, interacts with HNRNPA1 (via the RGG-box). Interacts with IGF2BP2.

Its function is as follows. Blocks the binding of HNRNPA1 to the intronic sequences flanking exon 9 of the PKM gene by competitively binding to the HNRNPA1 RGG-box motif. This inhibits inclusion of exon 9 and promotes inclusion of exon 10, suppressing formation of the PKM M2 isoform and promoting production of the M1 isoform. Also suppresses HNRNPA1-mediated processing of microRNA 18a (miR-18a). Promotes MYC stability through interaction with IGF2BP2. The sequence is that of HOXB-AS3 peptide from Homo sapiens (Human).